A 153-amino-acid chain; its full sequence is Lectin-like protein EP153R (153 aa).

Residues 1-30 (MYFKKKYIGLIDKNCEKKILDDSSTIKICY) are Cytoplasmic-facing. The chain crosses the membrane as a helical span at residues 31–51 (ILIGILIGTNMITLIYNFIFW). Over 52 to 153 (DNYIKCYRNN…YTDLLFICGK (102 aa)) the chain is Extracellular. A disulfide bridge links Cys-67 with Cys-78. N-linked (GlcNAc...) asparagine; by host glycosylation is found at Asn-83, Asn-89, Asn-101, Asn-107, Asn-113, Asn-120, Asn-127, and Asn-143. A disulfide bond links Cys-97 and Cys-151.

It belongs to the asfivirus lectin-like protein family. As to quaternary structure, homodimer.

The protein localises to the host endoplasmic reticulum membrane. In terms of biological role, down-regulates MHC-I expression by impairing the appropriate configuration or presentation into the plasma membrane of the latter. Participates in viral hemadsorption, which may help viral spread. Reduces the transactivating activity of host TP53, thus inhibiting apoptosis. Non-essential for virus growth in swine macrophage cell cultures. The polypeptide is Lectin-like protein EP153R (African swine fever virus (strain Badajoz 1971 Vero-adapted) (Ba71V)).